Reading from the N-terminus, the 309-residue chain is Taste receptor type 2 member 46 (309 aa).

Met1 is a topological domain (extracellular). The helical transmembrane segment at 2-22 (ITFLPIIFSILIVVTFVIGNF) threads the bilayer. The Cytoplasmic segment spans residues 23-46 (ANGFIALANSIEWFKRQKISFADQ). The helical transmembrane segment at 47–67 (ILTALAVSRVGLLWVLLLNWY) threads the bilayer. Residues 68–86 (ATELNPAFYSIEVRITAYN) are Extracellular-facing. A helical membrane pass occupies residues 87–107 (VWAVISHFSNWLATSLSIFYL). The Cytoplasmic portion of the chain corresponds to 108–126 (LKIANFSNLIFLRLKRRVK). A helical membrane pass occupies residues 127-147 (SVVLVILLGPLLFLVCHLFVI). The Extracellular segment spans residues 148–178 (NMNQIIWTKEYEGNMTWKIKLRSAMYLSDTT). Residue Asn161 is glycosylated (N-linked (GlcNAc...) asparagine). The helical transmembrane segment at 179–199 (VTILANLVPFTLTLISFLLLI) threads the bilayer. Residues 200 to 229 (CSLCKHLKKMQLHGKGSQDPSMKVHIKALQ) are Cytoplasmic-facing. Residues 230–250 (TVTSFLLLCAIYFLSVIMSVW) traverse the membrane as a helical segment. Residues 251–259 (SFESLENKP) are Extracellular-facing. Residues 260–280 (VFMFCEAITFSYPSTHPFILI) traverse the membrane as a helical segment. The Cytoplasmic portion of the chain corresponds to 281-309 (WGNKKLKQTFLSVLWHVRYWVKGEKPSSS).

The protein belongs to the G-protein coupled receptor T2R family.

It is found in the membrane. It localises to the cell projection. Its subcellular location is the cilium membrane. Functionally, receptor that may play a role in the perception of bitterness and is gustducin-linked. May play a role in sensing the chemical composition of the gastrointestinal content. The activity of this receptor may stimulate alpha gustducin, mediate PLC-beta-2 activation and lead to the gating of TRPM5. In airway epithelial cells, binding of bitter compounds increases the intracellular calcium ion concentration and stimulates ciliary beat frequency. The protein is Taste receptor type 2 member 46 (TAS2R46) of Gorilla gorilla gorilla (Western lowland gorilla).